Reading from the N-terminus, the 236-residue chain is DNA repair and recombination protein RadB (236 aa).

The protein belongs to the eukaryotic RecA-like protein family. RadB subfamily.

Its function is as follows. Involved in DNA repair and in homologous recombination. May regulate the cleavage reactions of the branch-structured DNA. Has a very weak ATPase activity that is not stimulated by DNA. Binds DNA but does not promote DNA strands exchange. In Halobacterium salinarum (strain ATCC 29341 / DSM 671 / R1), this protein is DNA repair and recombination protein RadB.